The following is a 148-amino-acid chain: RING finger protein 24 (148 aa).

The helical transmembrane segment at 24 to 44 (IYIVVFGTAIFVFILSLLFCC) threads the bilayer. The RING-type zinc finger occupies 78 to 119 (CAVCLEDFKPRDELGICPCKHAFHRKCLIKWLEVRKVCPLCN).

In terms of assembly, interacts with TRPC1, TRPC3, TRPC4, TRPC5, TRPC6 and TRPC7.

Its subcellular location is the golgi apparatus membrane. Its function is as follows. May play a role in TRPCs intracellular trafficking. The protein is RING finger protein 24 (RNF24) of Homo sapiens (Human).